A 313-amino-acid polypeptide reads, in one-letter code: Type I restriction enzyme EcoprrI endonuclease subunit (313 aa).

It belongs to the HsdR family. In terms of assembly, the type I restriction/modification system is composed of three polypeptides R, M and S; the restriction enzyme has stoichiometry R(2)M(2)S(1) while the methyltransferase is M(2)S(1).

The catalysed reaction is Endonucleolytic cleavage of DNA to give random double-stranded fragments with terminal 5'-phosphates, ATP is simultaneously hydrolyzed.. The subtype C restriction (R) subunit of a type I restriction enzyme that recognizes 5'-CCAN(7)RTGC-3' and cleaves a random distance away. The R subunit is required for both endonuclease and ATPase activities but not for modification. Cleaves only non-methylated DNA, hemi-methylated and fully methylated DNA are not substrates. After locating a non-methylated recognition site, the enzyme complex serves as a molecular motor that translocates DNA in an ATP-dependent manner until a collision occurs that triggers cleavage. The prr locus restricts phage T4 mutants lacking polynucleotide kinase or RNA ligase; T4 mutants lacking these genes manifest a T4-induced anticodon nuclease (ACNase). This is a putative 'masking-agent' for the ACNase encoded by prrC. It is thought that Stp and other T4-encoded ACNase factors counteract the masking agents, thus activating the latent ACNase. This is Type I restriction enzyme EcoprrI endonuclease subunit from Escherichia coli.